The primary structure comprises 327 residues: Lipoyl synthase (327 aa).

Cysteine 66, cysteine 71, cysteine 77, cysteine 92, cysteine 96, cysteine 99, and serine 306 together coordinate [4Fe-4S] cluster. The 218-residue stretch at 78-295 (FSKGTATFMI…EKEAYELGFT (218 aa)) folds into the Radical SAM core domain.

It belongs to the radical SAM superfamily. Lipoyl synthase family. [4Fe-4S] cluster is required as a cofactor.

It is found in the cytoplasm. It catalyses the reaction [[Fe-S] cluster scaffold protein carrying a second [4Fe-4S](2+) cluster] + N(6)-octanoyl-L-lysyl-[protein] + 2 oxidized [2Fe-2S]-[ferredoxin] + 2 S-adenosyl-L-methionine + 4 H(+) = [[Fe-S] cluster scaffold protein] + N(6)-[(R)-dihydrolipoyl]-L-lysyl-[protein] + 4 Fe(3+) + 2 hydrogen sulfide + 2 5'-deoxyadenosine + 2 L-methionine + 2 reduced [2Fe-2S]-[ferredoxin]. It functions in the pathway protein modification; protein lipoylation via endogenous pathway; protein N(6)-(lipoyl)lysine from octanoyl-[acyl-carrier-protein]: step 2/2. Its function is as follows. Catalyzes the radical-mediated insertion of two sulfur atoms into the C-6 and C-8 positions of the octanoyl moiety bound to the lipoyl domains of lipoate-dependent enzymes, thereby converting the octanoylated domains into lipoylated derivatives. This chain is Lipoyl synthase, found in Neisseria gonorrhoeae (strain ATCC 700825 / FA 1090).